A 371-amino-acid chain; its full sequence is D-alanine--D-alanine ligase (371 aa).

The ATP-grasp domain occupies 154–361; it reads KKLLVAEGLP…YPTLLAAMVD (208 aa). Residue 182 to 237 coordinates ATP; sequence RERLGLPVFVKPARGGSSIGVSRVSDWAELPAAIEAARRHDPKVIVEAGIAGRELE. Mg(2+) contacts are provided by D316, E328, and N330.

The protein belongs to the D-alanine--D-alanine ligase family. The cofactor is Mg(2+). It depends on Mn(2+) as a cofactor.

The protein resides in the cytoplasm. It carries out the reaction 2 D-alanine + ATP = D-alanyl-D-alanine + ADP + phosphate + H(+). It functions in the pathway cell wall biogenesis; peptidoglycan biosynthesis. Functionally, cell wall formation. The polypeptide is D-alanine--D-alanine ligase (Mycobacterium sp. (strain JLS)).